Consider the following 500-residue polypeptide: Abscisic acid 8'-hydroxylase 3 (500 aa).

Residues 3–23 (ASFVIVIVISFFISLAFMCYV) traverse the membrane as a helical segment. C426 provides a ligand contact to heme.

The protein belongs to the cytochrome P450 family. Requires heme as cofactor.

Its subcellular location is the membrane. The catalysed reaction is 2-cis-(+)-abscisate + reduced [NADPH--hemoprotein reductase] + O2 = (+)-8'-hydroxyabscisate + oxidized [NADPH--hemoprotein reductase] + H2O + H(+). Its pathway is plant hormone degradation; abscisic acid degradation. Involved in the oxidative degradation of abscisic acid. This Oryza sativa subsp. indica (Rice) protein is Abscisic acid 8'-hydroxylase 3 (CYP707A7).